Here is a 419-residue protein sequence, read N- to C-terminus: Histidine--tRNA ligase (419 aa).

The protein belongs to the class-II aminoacyl-tRNA synthetase family. In terms of assembly, homodimer.

It localises to the cytoplasm. It carries out the reaction tRNA(His) + L-histidine + ATP = L-histidyl-tRNA(His) + AMP + diphosphate + H(+). This is Histidine--tRNA ligase from Methylobacillus flagellatus (strain ATCC 51484 / DSM 6875 / VKM B-1610 / KT).